A 550-amino-acid polypeptide reads, in one-letter code: Efflux pump DEP3 (550 aa).

A disordered region spans residues 1–33; it reads MSEQSTLAGPYTEKPGVESQNPTGDGKASFDET. The next 11 membrane-spanning stretches (helical) occupy residues 44–64, 78–98, 109–129, 139–159, 172–192, 199–219, 242–262, 268–288, 319–339, 351–371, and 373–393; these read AIAY…NTIV, LELI…ILLW, WVYI…GAAP, VIAG…VSVL, STVV…AFAA, WGFY…MILF, AVIF…GGVV, GTII…IVLL, FLAS…FQFI, LLPL…LMPK, and GLIP…SALM. N399 is a glycosylation site (N-linked (GlcNAc...) asparagine). A run of 3 helical transmembrane segments spans residues 410 to 430, 439 to 459, and 515 to 535; these read ILVG…VQSL, AVGA…AICG, and SIWA…WPLF.

It belongs to the major facilitator superfamily. TCR/Tet family.

The protein resides in the cell membrane. Efflux pump; part of the gene cluster that mediates the biosynthesis of depudecin, a highly oxidized eleven-carbon linear polyketide that acts as a histone deacetylase (HDAC) inhibitor and makes a small contribution to pathogenesis. Is presumed either to be responsible for exporting depudecin, to provide self-protection, or both. This is Efflux pump DEP3 from Fusarium langsethiae.